A 1034-amino-acid chain; its full sequence is Ubiquitin-like-specific protease 2 (1034 aa).

Disordered stretches follow at residues 1–42, 71–110, 388–419, 731–800, 841–960, and 983–1034; these read MSAR…FRKD, IELS…HSSL, SHAV…DDAT, IDQS…PIRH, GVSS…DSLG, and SSPT…DEDP. Positions 19–33 are enriched in low complexity; it reads SSRASSPRSSASLPP. Residues 74 to 85 show a composition bias toward acidic residues; it reads SDNDVDNNDEGE. Over residues 743 to 756 the composition is skewed to low complexity; that stretch reads TSEPPCSRSSSIST. Ser788 is modified (phosphoserine). Composition is skewed to polar residues over residues 845–856, 876–904, and 912–923; these read PIKNDQALSSTH, QLSS…VISD, and GVNSESKNTSGI. Position 903 is a phosphoserine (Ser903). Residues Ser983 and Ser984 each carry the phosphoserine modification. The segment covering 992–1017 has biased composition (polar residues); sequence TSATSKGSNAQLLSNYGDENNQSQDS.

The protein belongs to the peptidase C48 family.

In terms of biological role, insertion mutation in SMT4 confers temperature and benomyl sensitivity; high copy suppressor of a temperature sensitive mutation in MIF2. This Saccharomyces cerevisiae (strain ATCC 204508 / S288c) (Baker's yeast) protein is Ubiquitin-like-specific protease 2 (ULP2).